A 574-amino-acid chain; its full sequence is Sodium/hydrogen exchanger 8 (574 aa).

The next 11 helical transmembrane spans lie at 53–73 (MTIF…HLLI), 77–97 (LHFL…GAFI), 116–136 (PNMF…YSLH), 149–169 (LFSV…IYFL), 184–204 (FAFG…IFNA), 254–274 (LGYF…TGLI), 304–324 (GLAE…GIVM), 347–367 (VAFM…FSFP), 373–393 (SFVI…IFPL), 410–430 (MFIM…SLHL), and 444–464 (TTII…MPLI).

It belongs to the monovalent cation:proton antiporter 1 (CPA1) transporter (TC 2.A.36) family.

Its subcellular location is the golgi apparatus membrane. Involved in pH regulation to eliminate acids generated by active metabolism or to counter adverse environmental conditions. Major proton extruding system driven by the inward sodium ion chemical gradient. Plays an important role in signal transduction. The polypeptide is Sodium/hydrogen exchanger 8 (Gallus gallus (Chicken)).